A 428-amino-acid chain; its full sequence is Cysteine synthase 2 (428 aa).

Residues 7–27 (IYIGSAFVAGVVLTIAFKDLF) form a helical membrane-spanning segment. K106 carries the post-translational modification N6-(pyridoxal phosphate)lysine. Pyridoxal 5'-phosphate contacts are provided by residues 260 to 264 (GTGGT) and S367.

The protein belongs to the cysteine synthase/cystathionine beta-synthase family. The cofactor is pyridoxal 5'-phosphate.

The protein localises to the mitochondrion outer membrane. It catalyses the reaction O-acetyl-L-serine + hydrogen sulfide = L-cysteine + acetate. Putative cysteine synthase that catalyzes the conversion of O-acetyl-L-serine (OAS) into cysteine, the last step in the cysteine biosynthesis pathway. However, in contrast to cysteine synthase cysB, this CS-like protein seems not to function in cysteine biosynthesis. This is Cysteine synthase 2 from Emericella nidulans (strain FGSC A4 / ATCC 38163 / CBS 112.46 / NRRL 194 / M139) (Aspergillus nidulans).